The sequence spans 103 residues: ATP synthase F(0) complex subunit g, mitochondrial (103 aa).

N-acetylalanine is present on alanine 2. Residues lysine 11, lysine 24, lysine 35, and lysine 54 each carry the N6-acetyllysine modification.

The protein belongs to the ATPase g subunit family. As to quaternary structure, component of the ATP synthase complex composed at least of ATP5F1A/subunit alpha, ATP5F1B/subunit beta, ATP5MC1/subunit c (homooctomer), MT-ATP6/subunit a, MT-ATP8/subunit 8, ATP5ME/subunit e, ATP5MF/subunit f, ATP5MG/subunit g, ATP5MK/subunit k, ATP5MJ/subunit j, ATP5F1C/subunit gamma, ATP5F1D/subunit delta, ATP5F1E/subunit epsilon, ATP5PF/subunit F6, ATP5PB/subunit b, ATP5PD/subunit d, ATP5PO/subunit OSCP. ATP synthase complex consists of a soluble F(1) head domain (subunits alpha(3) and beta(3)) - the catalytic core - and a membrane F(0) domain - the membrane proton channel (subunits c, a, 8, e, f, g, k and j). These two domains are linked by a central stalk (subunits gamma, delta, and epsilon) rotating inside the F1 region and a stationary peripheral stalk (subunits F6, b, d, and OSCP).

The protein localises to the mitochondrion. It is found in the mitochondrion inner membrane. Functionally, subunit g, of the mitochondrial membrane ATP synthase complex (F(1)F(0) ATP synthase or Complex V) that produces ATP from ADP in the presence of a proton gradient across the membrane which is generated by electron transport complexes of the respiratory chain. ATP synthase complex consist of a soluble F(1) head domain - the catalytic core - and a membrane F(1) domain - the membrane proton channel. These two domains are linked by a central stalk rotating inside the F(1) region and a stationary peripheral stalk. During catalysis, ATP synthesis in the catalytic domain of F(1) is coupled via a rotary mechanism of the central stalk subunits to proton translocation. In vivo, can only synthesize ATP although its ATP hydrolase activity can be activated artificially in vitro. Part of the complex F(0) domain. The protein is ATP synthase F(0) complex subunit g, mitochondrial of Pongo abelii (Sumatran orangutan).